A 105-amino-acid polypeptide reads, in one-letter code: MKVHKGDTVLVIAGKDKGAKGKVIAAYPERSRVLVEGVNRIKKHTPQSANERGASSGGIVTQEAPIHVSNVMVIDSDGQPTRIGYRVDEETGKKVRISRRNGKDI.

A disordered region spans residues 40 to 61 (RIKKHTPQSANERGASSGGIVT).

The protein belongs to the universal ribosomal protein uL24 family. Part of the 50S ribosomal subunit.

Its function is as follows. One of two assembly initiator proteins, it binds directly to the 5'-end of the 23S rRNA, where it nucleates assembly of the 50S subunit. Functionally, one of the proteins that surrounds the polypeptide exit tunnel on the outside of the subunit. The polypeptide is Large ribosomal subunit protein uL24 (Mycobacteroides abscessus (strain ATCC 19977 / DSM 44196 / CCUG 20993 / CIP 104536 / JCM 13569 / NCTC 13031 / TMC 1543 / L948) (Mycobacterium abscessus)).